A 412-amino-acid chain; its full sequence is Serine hydroxymethyltransferase (412 aa).

Residues L117 and 121-123 (GHL) contribute to the (6S)-5,6,7,8-tetrahydrofolate site. K226 is subject to N6-(pyridoxal phosphate)lysine.

The protein belongs to the SHMT family. In terms of assembly, homodimer. Pyridoxal 5'-phosphate is required as a cofactor.

It localises to the cytoplasm. The catalysed reaction is (6R)-5,10-methylene-5,6,7,8-tetrahydrofolate + glycine + H2O = (6S)-5,6,7,8-tetrahydrofolate + L-serine. It participates in one-carbon metabolism; tetrahydrofolate interconversion. It functions in the pathway amino-acid biosynthesis; glycine biosynthesis; glycine from L-serine: step 1/1. Its function is as follows. Catalyzes the reversible interconversion of serine and glycine with tetrahydrofolate (THF) serving as the one-carbon carrier. This reaction serves as the major source of one-carbon groups required for the biosynthesis of purines, thymidylate, methionine, and other important biomolecules. Also exhibits THF-independent aldolase activity toward beta-hydroxyamino acids, producing glycine and aldehydes, via a retro-aldol mechanism. This chain is Serine hydroxymethyltransferase, found in Staphylococcus aureus (strain USA300).